A 52-amino-acid chain; its full sequence is UPF0391 membrane protein XOO4217 (52 aa).

2 helical membrane passes run 5–25 and 27–47; these read AMIFFVIAIIAAVLGFSGIAG and ATNIAWILFVVFLILAVISMF.

Belongs to the UPF0391 family.

It localises to the cell membrane. This is UPF0391 membrane protein XOO4217 from Xanthomonas oryzae pv. oryzae (strain KACC10331 / KXO85).